Consider the following 243-residue polypeptide: Ribosomal RNA small subunit methyltransferase G (243 aa).

Residues glycine 80, phenylalanine 85, 132–133, and arginine 151 each bind S-adenosyl-L-methionine; that span reads IE.

It belongs to the methyltransferase superfamily. RNA methyltransferase RsmG family.

The protein resides in the cytoplasm. Functionally, specifically methylates the N7 position of a guanine in 16S rRNA. This Synechococcus sp. (strain CC9902) protein is Ribosomal RNA small subunit methyltransferase G.